Consider the following 479-residue polypeptide: MSHNLKQLFQQHNVKGLSINSKTVKDKDIFFAIKGRNTDGNDFIKDALSKGAVLVITDNKKNIVIDKVIYVKDVQAALYEAIEIFYPKKPKDLIAVTGTNGKSSVVSYIAQTYSLLGKKAASIGTIGVEIFGCVNLINDVPELTTLDYLSFRKIAHNLAENGIEYLVFEASSHGLDQARLREIKVNIACFTSFSQDHLDYHHTKENYLLAKLKLFINHLLPNGIAILNSDIEEIEFVKDYLHNHNVKFITVGTKGDLEITRLNCSLKGQNINFTFNNREYNFNTPIIGSFQASNLLIAVLSIHYIGFAFDDVIDSLVEVKAVKGRMERIDNTNIFVDYAHTPDALEKALTELKNIKLRDSKLSVVFGCGGNRDKAKRSLMGQIAAKRADTIIITDDNPRHEDPKLIRAEIISGIEKADYTEIANREEAIKYGINNLKQDDILLVAGKGHENYQIIGDKKLPFDDAEVVRKCIKVCHPVA.

Ser-21 is a binding site for UDP-N-acetyl-alpha-D-muramoyl-L-alanyl-D-glutamate. Residue 98-104 (GTNGKSS) participates in ATP binding. Residues 144–145 (TT), Ser-171, Gln-177, and Arg-179 contribute to the UDP-N-acetyl-alpha-D-muramoyl-L-alanyl-D-glutamate site. Lys-211 is modified (N6-carboxylysine). Meso-2,6-diaminopimelate-binding positions include Arg-372, 396–399 (DNPR), Gly-446, and Glu-450. A Meso-diaminopimelate recognition motif motif is present at residues 396–399 (DNPR).

This sequence belongs to the MurCDEF family. MurE subfamily. Requires Mg(2+) as cofactor. Post-translationally, carboxylation is probably crucial for Mg(2+) binding and, consequently, for the gamma-phosphate positioning of ATP.

The protein resides in the cytoplasm. The catalysed reaction is UDP-N-acetyl-alpha-D-muramoyl-L-alanyl-D-glutamate + meso-2,6-diaminopimelate + ATP = UDP-N-acetyl-alpha-D-muramoyl-L-alanyl-gamma-D-glutamyl-meso-2,6-diaminopimelate + ADP + phosphate + H(+). Its pathway is cell wall biogenesis; peptidoglycan biosynthesis. In terms of biological role, catalyzes the addition of meso-diaminopimelic acid to the nucleotide precursor UDP-N-acetylmuramoyl-L-alanyl-D-glutamate (UMAG) in the biosynthesis of bacterial cell-wall peptidoglycan. This chain is UDP-N-acetylmuramoyl-L-alanyl-D-glutamate--2,6-diaminopimelate ligase, found in Rickettsia rickettsii.